Reading from the N-terminus, the 128-residue chain is Nanos homolog 1 (128 aa).

Residues 7 to 23 form an essential for its translational repressor activity region; sequence FDSWSDYLGLSSLISRG. Residues 23 to 56 form a disordered region; sequence GLQPRGEGENPSPRWNVSCPAPAEPLPSKEPEGR. The Nanos-type zinc-finger motif lies at 60–114; the sequence is GCGFCRSNKEAMSLYSSHRLRSLDGRVLCPVLRGYTCPLCGANGDWAHTMRYCPL. Zn(2+) contacts are provided by C61, C64, H77, C88, C96, C99, H107, and C112. 2 consecutive short sequence motifs (C2HC) follow at residues 61–88 and 96–112; these read CGFC…RVLC and CPLC…MRYC.

Belongs to the nanos family. In terms of assembly, interacts with ccnb1.

The protein localises to the cytoplasm. Its subcellular location is the perinuclear region. Acts as a translational repressor. Can mediate repression affecting different steps in the translation process: cap-driven, IRES-driven, polyadenylated RNAs or nonpolyadenylated RNAs. Essential for the development of primordial germ cells (PGCs) by ensuring their proper migration and survival. The protein is Nanos homolog 1 (nanos1) of Xenopus borealis (Kenyan clawed frog).